The chain runs to 159 residues: Peripheral myelin protein 22 (159 aa).

Met-1 is a topological domain (cytoplasmic). Residues 2-31 traverse the membrane as a helical segment; sequence LLLLLGIIVLHVAVLVLLFVATIVSQWIVG. At 32–64 the chain is on the extracellular side; it reads NGHATDLWQNCSTTSGNVQHCLSSSANEWLQSV. A glycan (N-linked (GlcNAc...) asparagine) is linked at Asn-41. A helical transmembrane segment spans residues 65 to 91; it reads QATMILSIIFSVLSLFLFFCQLFTLTK. Over 92–95 the chain is Cytoplasmic; sequence GGRF. The helical transmembrane segment at 96-119 threads the bilayer; that stretch reads YITGIFQILAGLCVMSAASIYTVR. At 120-133 the chain is on the extracellular side; it reads HPEWHLDSAYSYGF. The helical transmembrane segment at 134–156 threads the bilayer; that stretch reads AYILAWVAFPLALLSGVVYVILR. The Cytoplasmic portion of the chain corresponds to 157–159; sequence KRE.

The protein belongs to the PMP-22/EMP/MP20 family. Post-translationally, ubiquitinated by the DCX(DCAF13) E3 ubiquitin ligase complex, leading to its degradation.

The protein localises to the cell membrane. Its function is as follows. Might be involved in growth regulation, and in myelinization in the peripheral nervous system. This chain is Peripheral myelin protein 22 (PMP22), found in Equus caballus (Horse).